Here is a 59-residue protein sequence, read N- to C-terminus: Large ribosomal subunit protein uL30 (59 aa).

Belongs to the universal ribosomal protein uL30 family. Part of the 50S ribosomal subunit.

The protein is Large ribosomal subunit protein uL30 of Acetivibrio thermocellus (strain ATCC 27405 / DSM 1237 / JCM 9322 / NBRC 103400 / NCIMB 10682 / NRRL B-4536 / VPI 7372) (Clostridium thermocellum).